The primary structure comprises 270 residues: 4-hydroxy-tetrahydrodipicolinate reductase (270 aa).

NAD(+) is bound by residues 8 to 13 (GALGRM), aspartate 34, 102 to 104 (GTT), and 128 to 131 (SQNY). Histidine 160 acts as the Proton donor/acceptor in catalysis. Histidine 161 lines the (S)-2,3,4,5-tetrahydrodipicolinate pocket. Lysine 164 serves as the catalytic Proton donor. 170–171 (GT) is a (S)-2,3,4,5-tetrahydrodipicolinate binding site.

It belongs to the DapB family.

The protein resides in the cytoplasm. It carries out the reaction (S)-2,3,4,5-tetrahydrodipicolinate + NAD(+) + H2O = (2S,4S)-4-hydroxy-2,3,4,5-tetrahydrodipicolinate + NADH + H(+). The catalysed reaction is (S)-2,3,4,5-tetrahydrodipicolinate + NADP(+) + H2O = (2S,4S)-4-hydroxy-2,3,4,5-tetrahydrodipicolinate + NADPH + H(+). Its pathway is amino-acid biosynthesis; L-lysine biosynthesis via DAP pathway; (S)-tetrahydrodipicolinate from L-aspartate: step 4/4. Its function is as follows. Catalyzes the conversion of 4-hydroxy-tetrahydrodipicolinate (HTPA) to tetrahydrodipicolinate. The polypeptide is 4-hydroxy-tetrahydrodipicolinate reductase (Methanococcus maripaludis (strain C7 / ATCC BAA-1331)).